The sequence spans 545 residues: Degenerin-like protein asic-2 (545 aa).

Residues 1–34 (MRGGGFVQIFKDFSNWSTVAVVPHVANANNKISR) lie on the Cytoplasmic side of the membrane. A helical membrane pass occupies residues 35 to 55 (IFWIAIFLFVLGMFAYELYIL). At 56-457 (IAKFFSYPAT…NVINDLGGQA (402 aa)) the chain is on the extracellular side. A disulfide bond links Cys83 and Cys191. Asn201 is a glycosylation site (N-linked (GlcNAc...) asparagine). Disulfide bonds link Cys284-Cys370, Cys305-Cys366, Cys309-Cys364, Cys318-Cys343, and Cys320-Cys334. N-linked (GlcNAc...) asparagine glycosylation occurs at Asn350. Residues 458 to 478 (GLWLGLSVISVVEMTGLMLVM) traverse the membrane as a helical segment. The GAS motif; ion selectivity filter signature appears at 462-464 (GLS). Over 479–545 (GAFCVTGGAI…NKGDEEKKKK (67 aa)) the chain is Cytoplasmic. Composition is skewed to basic and acidic residues over residues 514 to 523 (DHLEKKHGEM) and 534 to 545 (IENKGDEEKKKK). The segment at 514-545 (DHLEKKHGEMESGSDGEVDDIENKGDEEKKKK) is disordered.

Belongs to the amiloride-sensitive sodium channel (TC 1.A.6) family. As to quaternary structure, can form homotrimers. Heterotrimer; forms functional heterotrimers producing channel with different properties.

The protein localises to the cell membrane. The catalysed reaction is Na(+)(in) = Na(+)(out). Inhibited by the diuretic drug amiloride. Functionally, could form pH-gated heterotrimeric sodium channels that act as postsynaptic excitatory sensors in the nervous system, generating rapid, transient inward currents that fully desensitize upon extracellular acidification. The sequence is that of Degenerin-like protein asic-2 (asic-2) from Caenorhabditis elegans.